The primary structure comprises 197 residues: Phosphoheptose isomerase (197 aa).

Residues Met-37 to Met-197 form the SIS domain. Asn-52–Gly-54 lines the substrate pocket. Zn(2+) contacts are provided by His-61 and Glu-65. Substrate is bound by residues Glu-65, Asn-94–Asp-95, Ser-120–Ser-122, Ser-125, and Gln-175. Residues Gln-175 and His-183 each contribute to the Zn(2+) site.

This sequence belongs to the SIS family. GmhA subfamily. Homotetramer. It depends on Zn(2+) as a cofactor.

Its subcellular location is the cytoplasm. It carries out the reaction 2 D-sedoheptulose 7-phosphate = D-glycero-alpha-D-manno-heptose 7-phosphate + D-glycero-beta-D-manno-heptose 7-phosphate. The protein operates within carbohydrate biosynthesis; D-glycero-D-manno-heptose 7-phosphate biosynthesis; D-glycero-alpha-D-manno-heptose 7-phosphate and D-glycero-beta-D-manno-heptose 7-phosphate from sedoheptulose 7-phosphate: step 1/1. It participates in bacterial outer membrane biogenesis; LOS core biosynthesis. Catalyzes the isomerization of sedoheptulose 7-phosphate in D-glycero-D-manno-heptose 7-phosphate. The protein is Phosphoheptose isomerase of Neisseria meningitidis serogroup A / serotype 4A (strain DSM 15465 / Z2491).